The following is a 156-amino-acid chain: Putative pre-16S rRNA nuclease (156 aa).

It belongs to the YqgF nuclease family.

Its subcellular location is the cytoplasm. Its function is as follows. Could be a nuclease involved in processing of the 5'-end of pre-16S rRNA. This is Putative pre-16S rRNA nuclease from Gloeobacter violaceus (strain ATCC 29082 / PCC 7421).